A 350-amino-acid chain; its full sequence is uncharacterized protein (350 aa).

3 disordered regions span residues 1–21 (MDSF…SSLN), 237–266 (NSDV…PISP), and 278–298 (EMST…KKRT). Polar residues-rich tracts occupy residues 10–21 (KPTTATSNSSLN) and 246–259 (EDSS…TKPS). Residues 287 to 298 (SRSRTPSSKKRT) show a composition bias toward basic residues.

It localises to the nucleus. This is an uncharacterized protein from Schizosaccharomyces pombe (strain 972 / ATCC 24843) (Fission yeast).